Here is a 479-residue protein sequence, read N- to C-terminus: Cobyric acid synthase (479 aa).

The region spanning 250-442 (TRTVAVVAYP…LHGLFEDAAA (193 aa)) is the GATase cobBQ-type domain. Cysteine 331 (nucleophile) is an active-site residue. Histidine 434 is a catalytic residue.

This sequence belongs to the CobB/CobQ family. CobQ subfamily.

It functions in the pathway cofactor biosynthesis; adenosylcobalamin biosynthesis. Catalyzes amidations at positions B, D, E, and G on adenosylcobyrinic A,C-diamide. NH(2) groups are provided by glutamine, and one molecule of ATP is hydrogenolyzed for each amidation. The chain is Cobyric acid synthase from Variovorax paradoxus (strain S110).